The following is a 434-amino-acid chain: Trigger factor 2 (434 aa).

Residues 164–247 form the PPIase FKBP-type domain; sequence GDTVTVDYDC…VKKVERIEIL (84 aa).

The protein belongs to the FKBP-type PPIase family. Tig subfamily.

Its subcellular location is the cytoplasm. The enzyme catalyses [protein]-peptidylproline (omega=180) = [protein]-peptidylproline (omega=0). Functionally, involved in protein export. Acts as a chaperone by maintaining the newly synthesized protein in an open conformation. Functions as a peptidyl-prolyl cis-trans isomerase. The chain is Trigger factor 2 from Desulfitobacterium hafniense (strain Y51).